The primary structure comprises 268 residues: Undecaprenyl-diphosphatase (268 aa).

Helical transmembrane passes span 47 to 67 (FAIL…FFKL), 83 to 103 (FIIG…IAGK), 109 to 129 (LFDP…LLWV), 144 to 164 (YPLM…IPGV), 184 to 204 (AAEF…VYDF), 218 to 238 (LIAI…KAFL), and 246 to 266 (FVLF…ALAL).

This sequence belongs to the UppP family.

Its subcellular location is the cell inner membrane. The enzyme catalyses di-trans,octa-cis-undecaprenyl diphosphate + H2O = di-trans,octa-cis-undecaprenyl phosphate + phosphate + H(+). Catalyzes the dephosphorylation of undecaprenyl diphosphate (UPP). Confers resistance to bacitracin. In Bradyrhizobium sp. (strain ORS 278), this protein is Undecaprenyl-diphosphatase.